Consider the following 212-residue polypeptide: Uracil phosphoribosyltransferase (212 aa).

5-phospho-alpha-D-ribose 1-diphosphate is bound by residues Arg-78, Arg-103, and 130–138 (DPMLATGGS). Uracil contacts are provided by residues Ile-193 and 198 to 200 (GDA). Asp-199 contacts 5-phospho-alpha-D-ribose 1-diphosphate.

This sequence belongs to the UPRTase family. Mg(2+) serves as cofactor.

It catalyses the reaction UMP + diphosphate = 5-phospho-alpha-D-ribose 1-diphosphate + uracil. It functions in the pathway pyrimidine metabolism; UMP biosynthesis via salvage pathway; UMP from uracil: step 1/1. With respect to regulation, allosterically activated by GTP. Its function is as follows. Catalyzes the conversion of uracil and 5-phospho-alpha-D-ribose 1-diphosphate (PRPP) to UMP and diphosphate. The protein is Uracil phosphoribosyltransferase of Stutzerimonas stutzeri (strain A1501) (Pseudomonas stutzeri).